The primary structure comprises 336 residues: Fructose-1,6-bisphosphatase class 1 (336 aa).

The Mg(2+) site is built by glutamate 90, aspartate 112, leucine 114, and aspartate 115. Substrate is bound by residues 115–118 (DGSS), asparagine 211, and lysine 277. Position 283 (glutamate 283) interacts with Mg(2+).

It belongs to the FBPase class 1 family. As to quaternary structure, homotetramer. Mg(2+) serves as cofactor.

The protein localises to the cytoplasm. The enzyme catalyses beta-D-fructose 1,6-bisphosphate + H2O = beta-D-fructose 6-phosphate + phosphate. The protein operates within carbohydrate biosynthesis; gluconeogenesis. The protein is Fructose-1,6-bisphosphatase class 1 of Pseudomonas fluorescens (strain Pf0-1).